Here is a 1356-residue protein sequence, read N- to C-terminus: RHO1 GDP-GTP exchange protein 2 (1356 aa).

Ser-2 carries the N-acetylserine modification. 2 disordered regions span residues 74–94 (RRSG…EMKG) and 109–175 (EVPD…PRNE). Ser-76 carries the phosphoserine modification. 2 stretches are compositionally biased toward polar residues: residues 109–125 (EVPD…TPVS) and 147–157 (HIYSTSNSASR). Ser-193 carries the phosphoserine modification. Disordered stretches follow at residues 202-291 (LKKQ…RSMS), 303-362 (SFQS…SSSN), 383-409 (SVSG…VMSA), 531-571 (GNHS…SQQK), and 626-645 (NISM…TSSV). The span at 204–221 (KQSSFSTGSASTTPTQAR) shows a compositional bias: polar residues. Ser-223 carries the phosphoserine modification. Basic and acidic residues predominate over residues 235-244 (SSKDLHEQHQ). Residues 250-265 (QHNNINNHNNNNTNNN) show a composition bias toward low complexity. Residues 271 to 281 (VGSSNSNYPQH) show a composition bias toward polar residues. The segment covering 282–291 (SHSISSRSMS) has biased composition (low complexity). The segment covering 303-325 (SFQSKTSNSRKATQKYDITSNPF) has biased composition (polar residues). Positions 329–338 (HHHHHHHHSS) are enriched in basic residues. Composition is skewed to low complexity over residues 339 to 362 (NSHS…SSSN) and 383 to 401 (SVSG…TPLS). Residues Ser-566 and Ser-628 each carry the phosphoserine modification. The 188-residue stretch at 659–846 (KRQEAIYEVY…RDFMKRIDQA (188 aa)) folds into the DH domain. The CNH domain occupies 1034–1336 (TNKINSVTSC…RLLQTSTQEI (303 aa)).

Functionally, stimulates the exchange of RHO1 GDP-bound form into GTP-bound form. The sequence is that of RHO1 GDP-GTP exchange protein 2 (ROM2) from Saccharomyces cerevisiae (strain ATCC 204508 / S288c) (Baker's yeast).